We begin with the raw amino-acid sequence, 286 residues long: D-tagatose-1,6-bisphosphate aldolase subunit KbaY (286 aa).

Residue aspartate 82 is the Proton donor of the active site. Histidine 83 and histidine 180 together coordinate Zn(2+). Position 181 (glycine 181) interacts with dihydroxyacetone phosphate. Histidine 208 lines the Zn(2+) pocket. Dihydroxyacetone phosphate-binding positions include 209 to 211 and 230 to 233; these read GAS and NVAT.

It belongs to the class II fructose-bisphosphate aldolase family. TagBP aldolase KbaY subfamily. In terms of assembly, homotetramer. Forms a complex with KbaZ. Zn(2+) is required as a cofactor.

It carries out the reaction D-tagatofuranose 1,6-bisphosphate = D-glyceraldehyde 3-phosphate + dihydroxyacetone phosphate. The protein operates within carbohydrate metabolism; D-tagatose 6-phosphate degradation; D-glyceraldehyde 3-phosphate and glycerone phosphate from D-tagatose 6-phosphate: step 2/2. Catalytic subunit of the tagatose-1,6-bisphosphate aldolase KbaYZ, which catalyzes the reversible aldol condensation of dihydroxyacetone phosphate (DHAP or glycerone-phosphate) with glyceraldehyde 3-phosphate (G3P) to produce tagatose 1,6-bisphosphate (TBP). Requires KbaZ subunit for full activity and stability. The protein is D-tagatose-1,6-bisphosphate aldolase subunit KbaY of Escherichia coli O127:H6 (strain E2348/69 / EPEC).